Here is a 104-residue protein sequence, read N- to C-terminus: Small ribosomal subunit protein bS18 (104 aa).

Residues methionine 1–glutamate 14 show a composition bias toward basic and acidic residues. The segment at methionine 1 to glutamate 25 is disordered.

It belongs to the bacterial ribosomal protein bS18 family. As to quaternary structure, part of the 30S ribosomal subunit. Forms a tight heterodimer with protein bS6.

In terms of biological role, binds as a heterodimer with protein bS6 to the central domain of the 16S rRNA, where it helps stabilize the platform of the 30S subunit. This Mycoplasma pneumoniae (strain ATCC 29342 / M129 / Subtype 1) (Mycoplasmoides pneumoniae) protein is Small ribosomal subunit protein bS18.